The chain runs to 150 residues: 3-dehydroquinate dehydratase (150 aa).

Tyr-26 (proton acceptor) is an active-site residue. The substrate site is built by Asn-77, His-83, and Asp-90. The Proton donor role is filled by His-103. Substrate is bound by residues 104-105 (IS) and Arg-114.

The protein belongs to the type-II 3-dehydroquinase family. As to quaternary structure, homododecamer.

It carries out the reaction 3-dehydroquinate = 3-dehydroshikimate + H2O. Its pathway is metabolic intermediate biosynthesis; chorismate biosynthesis; chorismate from D-erythrose 4-phosphate and phosphoenolpyruvate: step 3/7. Its function is as follows. Catalyzes a trans-dehydration via an enolate intermediate. This Buchnera aphidicola subsp. Acyrthosiphon pisum (strain 5A) protein is 3-dehydroquinate dehydratase.